The chain runs to 805 residues: Ubiquitin carboxyl-terminal hydrolase 10-B (805 aa).

2 disordered regions span residues 136–173 and 284–305; these read AIPDGSGNADSDGTSGTGQRERKKKKKRPPGYYSYLEG and DTTENLGVTNGQTLESPEEDTV. Polar residues-rich tracts occupy residues 143-153 and 284-298; these read NADSDGTSGTG and DTTENLGVTNGQTLE. Positions 422-802 constitute a USP domain; the sequence is RGLINKGNWC…TAYLLYYRRV (381 aa). The active-site Nucleophile is Cys-431. A disordered region spans residues 573–600; sequence EEVNKEEQEGSDEEWEQVGPRNKSSVTR. The Proton acceptor role is filled by His-756.

Belongs to the peptidase C19 family. USP10 subfamily.

It localises to the cytoplasm. The protein localises to the nucleus. It catalyses the reaction Thiol-dependent hydrolysis of ester, thioester, amide, peptide and isopeptide bonds formed by the C-terminal Gly of ubiquitin (a 76-residue protein attached to proteins as an intracellular targeting signal).. Hydrolase that can remove conjugated ubiquitin from target proteins such as p53/tp53, rps2/us5, rps3/us3, rps10/eS10, becn1, snx3 and cftr. Acts as an essential regulator of p53/tp53 stability: in unstressed cells, specifically deubiquitinates p53/tp53 in the cytoplasm, leading to counteracts MDM2 action and stabilize p53/tp53. Following DNA damage, translocates to the nucleus and deubiquitinates p53/tp53, leading to regulate the p53/TP53-dependent DNA damage response. Component of a regulatory loop that controls autophagy and p53/tp53 levels. Plays a key role in 40S ribosome subunit recycling when a ribosome has stalled during translation: acts both by inhibiting formation of stress granules, which store stalled translation pre-initiation complexes, and mediating deubiquitination of 40S ribosome subunits. Deubiquitinates cftr in early endosomes, enhancing its endocytic recycling. This chain is Ubiquitin carboxyl-terminal hydrolase 10-B (usp10-b), found in Xenopus laevis (African clawed frog).